The sequence spans 116 residues: Vesicle-associated membrane protein 5 (116 aa).

At 1–72 (MAGIELERCQ…CWENIRYRIC (72 aa)) the chain is on the cytoplasmic side. A v-SNARE coiled-coil homology domain is found at 5–65 (ELERCQQQAN…QNLAQKKCWE (61 aa)). Phosphoserine occurs at positions 41, 48, and 49. The chain crosses the membrane as a helical; Anchor for type IV membrane protein span at residues 73 to 93 (VGLVVVGVLLIILIVLLVVFL). Residues 94–116 (PQSSDSSSAPRTQDAGIASGPGN) are Vesicular-facing. Residues 96–116 (SSDSSSAPRTQDAGIASGPGN) are disordered.

The protein belongs to the synaptobrevin family. In terms of processing, (Microbial infection) Targeted and hydrolyzed by C.botulinum neurotoxin type X (BoNT/X) which hydrolyzes the 40-Arg-|-Ser-41 bond and probably inhibits neurotransmitter release. It remains unknown whether BoNT/X is ever produced, or what organisms it targets.

It localises to the cell membrane. Its subcellular location is the endomembrane system. It is found in the golgi apparatus. The protein localises to the trans-Golgi network membrane. May participate in trafficking events that are associated with myogenesis, such as myoblast fusion and/or GLUT4 trafficking. In Homo sapiens (Human), this protein is Vesicle-associated membrane protein 5 (VAMP5).